A 707-amino-acid polypeptide reads, in one-letter code: Polyribonucleotide nucleotidyltransferase (707 aa).

2 residues coordinate Mg(2+): Asp-487 and Asp-493. The region spanning 554-613 is the KH domain; the sequence is PKILTMNINPDKIRDVIGPSGKQINKIIEDTGVKIDIEQDGTIFISSTDESSNQKAKKII. The S1 motif domain maps to 623–691; that stretch reads GQLYLGKVKR…KQGRVNLSRK (69 aa).

It belongs to the polyribonucleotide nucleotidyltransferase family. Mg(2+) serves as cofactor.

Its subcellular location is the cytoplasm. It catalyses the reaction RNA(n+1) + phosphate = RNA(n) + a ribonucleoside 5'-diphosphate. In terms of biological role, involved in mRNA degradation. Catalyzes the phosphorolysis of single-stranded polyribonucleotides processively in the 3'- to 5'-direction. In Bacillus velezensis (strain DSM 23117 / BGSC 10A6 / LMG 26770 / FZB42) (Bacillus amyloliquefaciens subsp. plantarum), this protein is Polyribonucleotide nucleotidyltransferase.